The following is a 445-amino-acid chain: Rab GDP dissociation inhibitor beta (445 aa).

At M1 the chain carries N-acetylmethionine. K57 is subject to N6-succinyllysine. K112 carries the N6-acetyllysine modification. S130 carries the post-translational modification Phosphoserine. The residue at position 269 (K269) is an N6-acetyllysine. At S382 the chain carries Phosphoserine.

The protein belongs to the Rab GDI family. In terms of assembly, interacts with RHOH. Interacts with the GDP-bound inactive forms of RAB3A, RAB3B, RAB3C, RAB5A, RAB5B, RAB5C, RAB8A, RAB8B, RAB10, RAB12, RAB35, and RAB43; binds RAB3D to a lesser extent. Interacts with DZIP1; this interaction negatively regulates the interaction of GDI2 with GDP-bound RAB8A.

Its subcellular location is the cytoplasm. The protein resides in the membrane. It localises to the golgi apparatus. It is found in the trans-Golgi network. In terms of biological role, GDP-dissociation inhibitor preventing the GDP to GTP exchange of most Rab proteins. By keeping these small GTPases in their inactive GDP-bound form regulates intracellular membrane trafficking. Negatively regulates protein transport to the cilium and ciliogenesis through the inhibition of RAB8A. In Pongo abelii (Sumatran orangutan), this protein is Rab GDP dissociation inhibitor beta (GDI2).